The following is a 1162-amino-acid chain: Carbamoyl phosphate synthase large chain (1162 aa).

The tract at residues 1 to 456 (MPKRTDIKSI…SLQKALRGLE (456 aa)) is carboxyphosphate synthetic domain. ATP is bound by residues Arg-129, Arg-222, Gly-228, Gly-229, Glu-261, Val-263, Glu-268, Gly-294, Val-295, His-296, Gln-338, and Glu-352. An ATP-grasp 1 domain is found at 186–381 (ETEWQLGEVE…IAKVAAKLAV (196 aa)). Residues Gln-338, Glu-352, and Asn-354 each coordinate Mg(2+). Mn(2+)-binding residues include Gln-338, Glu-352, and Asn-354. The interval 457–613 (TGLTGFDEIA…PFVGQPRSEA (157 aa)) is oligomerization domain. Residues 614–1025 (EVSDRKKVVI…AFAKAQLGAG (412 aa)) are carbamoyl phosphate synthetic domain. The region spanning 742–954 (QKLLIKLDLN…IAKVAARIMA (213 aa)) is the ATP-grasp 2 domain. The ATP site is built by Arg-778, Thr-838, Leu-840, Glu-845, Gly-870, Ile-871, His-872, Ser-873, Gln-913, and Glu-925. Gln-913, Glu-925, and Asn-927 together coordinate Mg(2+). Mn(2+) is bound by residues Gln-913, Glu-925, and Asn-927. Residues 1026–1162 (VELPREGTVF…VRPLQDYFRS (137 aa)) enclose the MGS-like domain. The allosteric domain stretch occupies residues 1026–1162 (VELPREGTVF…VRPLQDYFRS (137 aa)).

It belongs to the CarB family. Composed of two chains; the small (or glutamine) chain promotes the hydrolysis of glutamine to ammonia, which is used by the large (or ammonia) chain to synthesize carbamoyl phosphate. Tetramer of heterodimers (alpha,beta)4. Mg(2+) serves as cofactor. The cofactor is Mn(2+).

The catalysed reaction is hydrogencarbonate + L-glutamine + 2 ATP + H2O = carbamoyl phosphate + L-glutamate + 2 ADP + phosphate + 2 H(+). It carries out the reaction hydrogencarbonate + NH4(+) + 2 ATP = carbamoyl phosphate + 2 ADP + phosphate + 2 H(+). It functions in the pathway amino-acid biosynthesis; L-arginine biosynthesis; carbamoyl phosphate from bicarbonate: step 1/1. The protein operates within pyrimidine metabolism; UMP biosynthesis via de novo pathway; (S)-dihydroorotate from bicarbonate: step 1/3. Functionally, large subunit of the glutamine-dependent carbamoyl phosphate synthetase (CPSase). CPSase catalyzes the formation of carbamoyl phosphate from the ammonia moiety of glutamine, carbonate, and phosphate donated by ATP, constituting the first step of 2 biosynthetic pathways, one leading to arginine and/or urea and the other to pyrimidine nucleotides. The large subunit (synthetase) binds the substrates ammonia (free or transferred from glutamine from the small subunit), hydrogencarbonate and ATP and carries out an ATP-coupled ligase reaction, activating hydrogencarbonate by forming carboxy phosphate which reacts with ammonia to form carbamoyl phosphate. The polypeptide is Carbamoyl phosphate synthase large chain (Brucella melitensis biotype 1 (strain ATCC 23456 / CCUG 17765 / NCTC 10094 / 16M)).